The chain runs to 1793 residues: Non-reducing polyketide synthase adaA (1793 aa).

The tract at residues 16-250 (NDDLKALFRG…YSKSLALPVY (235 aa)) is N-terminal acylcarrier protein transacylase domain (SAT). Positions 388–821 (DSKLAIVGMA…GGNTTLVLED (434 aa)) constitute a Ketosynthase family 3 (KS3) domain. Catalysis depends on for beta-ketoacyl synthase activity residues C561, H696, and H739. The malonyl-CoA:ACP transacylase (MAT) domain stretch occupies residues 923 to 1245 (VFTFTGQGAY…KSLCTLHLAG (323 aa)). The segment at 1312 to 1634 (TSLIHQVTEE…RLLMDRFFSP (323 aa)) is product template (PT) domain. The interval 1316-1452 (HQVTEETVDK…GSIKYPADPT (137 aa)) is N-terminal hotdog fold. The region spanning 1316–1629 (HQVTEETVDK…FRRVPRLLMD (314 aa)) is the PKS/mFAS DH domain. H1348 serves as the catalytic Proton acceptor; for dehydratase activity. The C-terminal hotdog fold stretch occupies residues 1482–1629 (KASTLSKPLA…FRRVPRLLMD (148 aa)). D1540 acts as the Proton donor; for dehydratase activity in catalysis. The segment covering 1642–1659 (AAPAPAPAAVPAVKKQPP) has biased composition (low complexity). The interval 1642–1714 (AAPAPAPAAV…TTEQEAPVAD (73 aa)) is disordered. The span at 1660–1681 (TETIQPQAPKTEQKQDQLQLPN) shows a compositional bias: polar residues. The span at 1683–1706 (ASAAPSTANSSSSPSSSGVATPTT) shows a compositional bias: low complexity. The 78-residue stretch at 1716-1793 (SAVTGVAGKC…DLTGWLEQYC (78 aa)) folds into the Carrier domain. Position 1753 is an O-(pantetheine 4'-phosphoryl)serine (S1753).

It depends on pantetheine 4'-phosphate as a cofactor.

It catalyses the reaction holo-[ACP] + 9 malonyl-CoA + acetyl-CoA + 9 H(+) = 3-(2,4-dioxopentyl)-3,6,8,9-tetrahydroxy-1-oxo-1,2,3,4-tetrahydroanthracene-2-carboxyl-[ACP] + 9 CO2 + 10 CoA + 2 H2O. The protein operates within secondary metabolite biosynthesis. Non-reducing polyketide synthase; part of the gene cluster that mediates the biosynthesis of the linear tetracyclic TAN-1612 neuropeptide Y receptor antagonist. The decaketide backbone of TAN-1612 is synthesized by the non-reducing polyketide synthase adaA via condensation of one acetyl-CoA starter unit with 9 malonyl-CoA units. The FAD-dependent monooxygenase adaC then performs hydroxylation at C2 while the polaketide chain is still attached to the NRPKS adaA. The alpha-hydroxylation step at C2 appears to be crucial for the following C18-C1 Claisen cyclization and release of the C9-hydroxyl version of TAN-1612 from the NRPKS adaA, two steps performed by the lactamase-like protein adaB. Finally, the O-methyltransferase adaD performs the C9 O-methylation to complete the biosynthesis of TAN-1612. The chain is Non-reducing polyketide synthase adaA from Aspergillus niger (strain ATCC MYA-4892 / CBS 513.88 / FGSC A1513).